The chain runs to 301 residues: Nucleotide-binding protein Noca_2527 (301 aa).

An ATP-binding site is contributed by 26–33 (GMTGAGRS). GTP is bound at residue 77-80 (DVRS).

This sequence belongs to the RapZ-like family.

In terms of biological role, displays ATPase and GTPase activities. This Nocardioides sp. (strain ATCC BAA-499 / JS614) protein is Nucleotide-binding protein Noca_2527.